The primary structure comprises 365 residues: G-protein coupled receptor 68 (365 aa).

The Extracellular portion of the chain corresponds to 1 to 12; the sequence is MGNITTENSSLS. 2 N-linked (GlcNAc...) asparagine glycosylation sites follow: asparagine 3 and asparagine 8. The chain crosses the membrane as a helical span at residues 13 to 49; the sequence is CPIDHTIHQTLAPVVYVTVLVVGFPANCLSLYFGYLQ. 2 cysteine pairs are disulfide-bonded: cysteine 13–cysteine 258 and cysteine 94–cysteine 172. At 50 to 53 the chain is on the cytoplasmic side; sequence IKAR. The chain crosses the membrane as a helical span at residues 54 to 84; the sequence is NELGVYLCNLTIADLFYICSLPFWLQYVLQH. Residues 85 to 89 are Extracellular-facing; sequence DDWSH. Residues 90–125 form a helical membrane-spanning segment; the sequence is GDLSCQVCGILLYENIYISVGFLCCISIDRYLAVAH. At 126–133 the chain is on the cytoplasmic side; the sequence is PFRFHQFR. Residues 134 to 160 traverse the membrane as a helical segment; it reads TLKAAVGVSVLIWAKELLTSIYFLNHK. Residues 161–176 lie on the Extracellular side of the membrane; that stretch reads EVIEDEDQHRVCFEHY. Residues 161–176 are extracellular loop 2 (ECL2); sequence EVIEDEDQHRVCFEHY. The chain crosses the membrane as a helical span at residues 177–214; sequence PIQAWQRSINYYRFLVGFLFPICLLLASYQGILRAVRR. The Cytoplasmic portion of the chain corresponds to 215-218; the sequence is SHGT. The chain crosses the membrane as a helical span at residues 219 to 254; that stretch reads QKSRKDQIQRLVLSTVVIFLACFLPYHVLLLVRSLW. Over 255-260 the chain is Extracellular; that stretch reads ERNCEF. A helical transmembrane segment spans residues 261-289; it reads AKSIFNVYHFSLLLTSFNCVADPVLYCFV. At 290–365 the chain is on the cytoplasmic side; the sequence is SETTHRDLAR…VGGPSTVGLA (76 aa).

The protein belongs to the G-protein coupled receptor 1 family. Expressed in the lung, testis, heart, brain, spleen, thymus, brown fat, small intestine, colon, peripheral blood leukocytes, macrophages, stomach, ovary and white fat but not in the liver, kidney, and skeletal muscle. Expression in the prostate is weak but detectable. Specifically expressed in endothelial cells of small-diameter resistance arteries.

It localises to the cell membrane. With respect to regulation, activated by a network of residues that connects an extracellular-facing cavity to Glu-149, a conserved charged residue buried in the transmembrane core of the receptor. Protonation likely drives conformational changes in extracellular loop 2 (ECL2), which stabilizes movement of transmembrane 3 (TM3) and a series of rearrangements that connect the extracellular-facing cavity to Glu-149, a residue only conserved in proton-sensing G-protein coupled receptors. Activated in an allosteric manner by divalent metal ions at the extracellular surface following the order: Cd(2+) &gt; Co(2+) &gt; Ni(2+) &gt; Zn(2+) &gt; Fe(2+) &gt; Ca(2+) &gt; Mg(2+). Activated by ogerin (ZINC67740571), a selective GPR68 positive allosteric modulator. Inhibited by small molecule GPR68-I, decreasing inflammation in models of colitis. Functionally, proton-sensing G-protein coupled receptor activated by extracellular pH, which is required to monitor pH changes and generate adaptive reactions. The receptor is almost silent at pH 7.8 but fully activated at pH 6.8. Ligand binding causes a conformation change that triggers signaling via guanine nucleotide-binding proteins (G proteins) and modulates the activity of downstream effectors, such as phospholipase C. GPR68 is mainly coupled to G(q) G proteins and mediates production of diacylglycerol (DAG) and inositol 1,4,5-trisphosphate (IP3). Acts as a key mechanosensor of fluid shear stress and membrane stretch. Expressed in endothelial cells of small-diameter resistance arteries, where it mediates flow-induced dilation in response to shear stress. May represents an osteoblastic pH sensor regulating cell-mediated responses to acidosis in bone. Acts as a regulator of calcium-sensing receptor CASR in a seesaw manner: GPR68-mediated signaling inhibits CASR signaling in response to protons, while CASR inhibits GPR68 in presence of extracellular calcium. Also functions as a metastasis suppressor gene in prostate cancer. The polypeptide is G-protein coupled receptor 68 (Mus musculus (Mouse)).